A 259-amino-acid chain; its full sequence is uncharacterized protein (259 aa).

Belongs to the BtpA family.

This is an uncharacterized protein from Pyrococcus abyssi (strain GE5 / Orsay).